Reading from the N-terminus, the 381-residue chain is Outer membrane protein assembly factor BamB (381 aa).

The first 22 residues, 1–22, serve as a signal peptide directing secretion; the sequence is MNLLKRYAAPVACAAAVLVFAA. Cys-23 is lipidated: N-palmitoyl cysteine. Residue Cys-23 is the site of S-diacylglycerol cysteine attachment.

This sequence belongs to the BamB family. Part of the Bam complex.

It localises to the cell outer membrane. Part of the outer membrane protein assembly complex, which is involved in assembly and insertion of beta-barrel proteins into the outer membrane. The chain is Outer membrane protein assembly factor BamB from Burkholderia pseudomallei (strain K96243).